A 23-amino-acid chain; its full sequence is Endochitinase B (23 aa).

Belongs to the glycosyl hydrolase 19 family. Chitinase class I subfamily.

The catalysed reaction is Random endo-hydrolysis of N-acetyl-beta-D-glucosaminide (1-&gt;4)-beta-linkages in chitin and chitodextrins.. Functionally, defense against chitin-containing fungal pathogens. The chain is Endochitinase B from Pisum sativum (Garden pea).